A 154-amino-acid chain; its full sequence is Nuclear cap-binding protein subunit 2 (154 aa).

Residues tyrosine 10, tyrosine 33, 102-106 (RVDWD), 113-117 (RQYGR), and 123-124 (QV) each bind mRNA. The 79-residue stretch at 30–108 (CTLYVGNLSF…RLIRVDWDAG (79 aa)) folds into the RRM domain.

It belongs to the RRM NCBP2 family. In terms of assembly, component of the nuclear cap-binding complex (CBC), a heterodimer composed of Cbp80 and Cbp20 that interacts with m7GpppG-capped RNA. Interacts with Ars2.

It is found in the nucleus. Its function is as follows. Component of the cap-binding complex (CBC), which binds co-transcriptionally to the 5' cap of pre-mRNAs and is involved in various processes such as pre-mRNA splicing and RNA-mediated gene silencing (RNAi). The CBC complex is involved in miRNA-mediated RNA interference via its interaction with Ars2 and is required for primary microRNAs (miRNAs) processing. Also involved in innate immunity via the short interfering RNAs (siRNAs) processing machinery by restricting the viral RNA production. In the CBC complex, Cbp20 recognizes and binds capped RNAs (m7GpppG-capped RNA) but requires Cbp80 to stabilize the movement of its N-terminal loop and lock the CBC into a high affinity cap-binding state with the cap structure. In Drosophila persimilis (Fruit fly), this protein is Nuclear cap-binding protein subunit 2 (Cbp20).